The sequence spans 214 residues: Glutathione S-transferase F11 (214 aa).

One can recognise a GST N-terminal domain in the interval 2 to 82 (VVKVYGQIKA…YYATKYADQG (81 aa)). Glutathione contacts are provided by residues 11–12 (AA), 40–41 (QK), 53–54 (QV), and 66–67 (ES). The region spanning 89–214 (TLEGRAIVDQ…WKKLMELAAY (126 aa)) is the GST C-terminal domain.

This sequence belongs to the GST superfamily. Phi family.

The protein resides in the cytoplasm. It is found in the cytosol. It catalyses the reaction RX + glutathione = an S-substituted glutathione + a halide anion + H(+). May be involved in the conjugation of reduced glutathione to a wide number of exogenous and endogenous hydrophobic electrophiles and have a detoxification role against certain herbicides. The chain is Glutathione S-transferase F11 from Arabidopsis thaliana (Mouse-ear cress).